We begin with the raw amino-acid sequence, 266 residues long: Protein YABBY 5 (266 aa).

The disordered stretch occupies residues 1–22; the sequence is MMSSAPETFSLDHLSQHQQQQP. The segment at 36–63 adopts a C4-type zinc-finger fold; that stretch reads CNFCDTILAVGVPCSSLFKTVTVRCGHC. Residues 119–141 are compositionally biased toward low complexity; it reads ASPNVSSITSSNSSCANNAPATS. The interval 119 to 174 is disordered; that stretch reads ASPNVSSITSSNSSCANNAPATSMASAANKATQREPQQPKNAPSANRTSEKRQRVP. Residues 142 to 165 are compositionally biased toward polar residues; that stretch reads MASAANKATQREPQQPKNAPSANR.

Belongs to the YABBY family.

The protein resides in the nucleus. Functionally, may be involved in leaf cell growth and differentiation, rather than abaxial cell fate determination. In Oryza sativa subsp. indica (Rice), this protein is Protein YABBY 5 (YAB5).